We begin with the raw amino-acid sequence, 217 residues long: Vesicle transport through interaction with t-SNAREs homolog 1A (217 aa).

The Cytoplasmic segment spans residues 1–192; sequence MSSDFEGYEQ…GMLRRIIQNR (192 aa). Coiled coils occupy residues 31-92 and 112-178; these read PDEK…KRSR and ENQR…GKSS. The helical; Anchor for type IV membrane protein transmembrane segment at 193–213 threads the bilayer; it reads ILLVILGIIVVIAILTAIAFF. Residues 214 to 217 are Vesicular-facing; that stretch reads VKGH.

It belongs to the VTI1 family. Interacts with distinct SNARE complexes that contain either STX5 or STX6. Interacts with NAPA and, to a lesser extent, with NAPG. Identified in a complex containing STX6, STX12, VAMP4 and VTI1A. Widely expressed.

It localises to the golgi apparatus membrane. Its function is as follows. V-SNARE that mediates vesicle transport pathways through interactions with t-SNAREs on the target membrane. These interactions are proposed to mediate aspects of the specificity of vesicle trafficking and to promote fusion of the lipid bilayers. Involved in vesicular transport from the late endosomes to the trans-Golgi network. Along with VAMP7, involved in an non-conventional RAB1-dependent traffic route to the cell surface used by KCNIP1 and KCND2. May be concerned with increased secretion of cytokines associated with cellular senescence. This chain is Vesicle transport through interaction with t-SNAREs homolog 1A (Vti1a), found in Mus musculus (Mouse).